Here is a 312-residue protein sequence, read N- to C-terminus: Pantothenate synthetase (312 aa).

Residue 42-49 (MGALHTGH) coordinates ATP. The Proton donor role is filled by His49. A (R)-pantoate-binding site is contributed by Gln73. Position 73 (Gln73) interacts with beta-alanine. 159–162 (GEKD) serves as a coordination point for ATP. Position 165 (Gln165) interacts with (R)-pantoate. ATP is bound by residues Val188 and 196–199 (LSSR).

The protein belongs to the pantothenate synthetase family. In terms of assembly, homodimer.

The protein localises to the cytoplasm. The catalysed reaction is (R)-pantoate + beta-alanine + ATP = (R)-pantothenate + AMP + diphosphate + H(+). The protein operates within cofactor biosynthesis; (R)-pantothenate biosynthesis; (R)-pantothenate from (R)-pantoate and beta-alanine: step 1/1. In terms of biological role, catalyzes the condensation of pantoate with beta-alanine in an ATP-dependent reaction via a pantoyl-adenylate intermediate. In Rhodococcus jostii (strain RHA1), this protein is Pantothenate synthetase.